Consider the following 434-residue polypeptide: UDP-N-acetylglucosamine 1-carboxyvinyltransferase 1 (434 aa).

22-23 lines the phosphoenolpyruvate pocket; the sequence is KN. Arg-93 is a UDP-N-acetyl-alpha-D-glucosamine binding site. Cys-117 (proton donor) is an active-site residue. Cys-117 carries the 2-(S-cysteinyl)pyruvic acid O-phosphothioketal modification. Residues 122 to 126, Asp-306, and Val-328 each bind UDP-N-acetyl-alpha-D-glucosamine; that span reads RPIDQ.

Belongs to the EPSP synthase family. MurA subfamily.

The protein resides in the cytoplasm. The catalysed reaction is phosphoenolpyruvate + UDP-N-acetyl-alpha-D-glucosamine = UDP-N-acetyl-3-O-(1-carboxyvinyl)-alpha-D-glucosamine + phosphate. The protein operates within cell wall biogenesis; peptidoglycan biosynthesis. Cell wall formation. Adds enolpyruvyl to UDP-N-acetylglucosamine. This Bacillus cereus (strain ATCC 14579 / DSM 31 / CCUG 7414 / JCM 2152 / NBRC 15305 / NCIMB 9373 / NCTC 2599 / NRRL B-3711) protein is UDP-N-acetylglucosamine 1-carboxyvinyltransferase 1.